We begin with the raw amino-acid sequence, 1051 residues long: Kinesin-like protein KIN-4B (1051 aa).

Positions 1–21 (MESHSSLSSSSSSSPPSSLSS) are disordered. One can recognise a Kinesin motor domain in the interval 25–380 (CVKVAVNVRP…LKYANRARNI (356 aa)). 104 to 111 (GQTGSGKT) lines the ATP pocket. Coiled coils occupy residues 414–448 (ATSS…RSKR) and 540–644 (RQHF…KMKQ). Low complexity predominate over residues 916–925 (SSSYSGSSRS). 2 disordered regions span residues 916–946 (SSSY…SSTY) and 1029–1051 (MSKS…FQGA).

This sequence belongs to the TRAFAC class myosin-kinesin ATPase superfamily. Kinesin family. KIN-4 subfamily. In terms of assembly, homodimer.

Kinesin-like motor protein involved in the control of the oriented deposition of cellulose microfibrils. The chain is Kinesin-like protein KIN-4B from Arabidopsis thaliana (Mouse-ear cress).